The following is a 427-amino-acid chain: Enolase (427 aa).

Gln-163 is a binding site for (2R)-2-phosphoglycerate. Glu-205 functions as the Proton donor in the catalytic mechanism. Mg(2+) is bound by residues Asp-242, Glu-285, and Asp-312. (2R)-2-phosphoglycerate is bound by residues Lys-337, Arg-366, Ser-367, and Lys-388. Catalysis depends on Lys-337, which acts as the Proton acceptor.

The protein belongs to the enolase family. Requires Mg(2+) as cofactor.

Its subcellular location is the cytoplasm. The protein localises to the secreted. The protein resides in the cell surface. The enzyme catalyses (2R)-2-phosphoglycerate = phosphoenolpyruvate + H2O. Its pathway is carbohydrate degradation; glycolysis; pyruvate from D-glyceraldehyde 3-phosphate: step 4/5. In terms of biological role, catalyzes the reversible conversion of 2-phosphoglycerate (2-PG) into phosphoenolpyruvate (PEP). It is essential for the degradation of carbohydrates via glycolysis. This chain is Enolase, found in Variovorax paradoxus (strain S110).